Here is a 250-residue protein sequence, read N- to C-terminus: tRNA (guanine-N(1)-)-methyltransferase (250 aa).

S-adenosyl-L-methionine is bound by residues Gly-115 and Leu-135 to Leu-140.

It belongs to the RNA methyltransferase TrmD family. As to quaternary structure, homodimer.

The protein resides in the cytoplasm. It carries out the reaction guanosine(37) in tRNA + S-adenosyl-L-methionine = N(1)-methylguanosine(37) in tRNA + S-adenosyl-L-homocysteine + H(+). Functionally, specifically methylates guanosine-37 in various tRNAs. In Legionella pneumophila (strain Lens), this protein is tRNA (guanine-N(1)-)-methyltransferase.